We begin with the raw amino-acid sequence, 375 residues long: Aminomethyltransferase (375 aa).

It belongs to the GcvT family. The glycine cleavage system is composed of four proteins: P, T, L and H.

The enzyme catalyses N(6)-[(R)-S(8)-aminomethyldihydrolipoyl]-L-lysyl-[protein] + (6S)-5,6,7,8-tetrahydrofolate = N(6)-[(R)-dihydrolipoyl]-L-lysyl-[protein] + (6R)-5,10-methylene-5,6,7,8-tetrahydrofolate + NH4(+). Its function is as follows. The glycine cleavage system catalyzes the degradation of glycine. The polypeptide is Aminomethyltransferase (Ralstonia pickettii (strain 12J)).